Here is a 362-residue protein sequence, read N- to C-terminus: Histidine protein methyltransferase 1 homolog (362 aa).

Positions 18–88 (TSLDDGTCVL…EACKHQPSWK (71 aa)) are disordered. A compositionally biased stretch (basic and acidic residues) spans 30 to 51 (QKGKQDKRQSTERPGLPRDHSW). The segment covering 52-65 (KCSSLGNAASSEDT) has biased composition (polar residues). Residues Ser-62 and Ser-67 each carry the phosphoserine modification. Basic and acidic residues predominate over residues 73 to 82 (DRSDDPEACK). His-144 carries the tele-methylhistidine modification. Residues 158-162 (IWECT), Gly-185, and 206-208 (QDY) each bind S-adenosyl-L-methionine. Residues 237–243 (PDGKRQR) carry the Nuclear localization signal motif. Residues 259–261 (GEW) and Ser-283 each bind S-adenosyl-L-methionine.

This sequence belongs to the methyltransferase superfamily. METTL18 family. Interacts with GRWD1 and members of the heat shock protein 90 and 70 families; these proteins may possibly be methylation substrates for the enzyme. Post-translationally, monomethylated at His-144 through automethylation. Automethylation at His-144 positively regulates the methyltransferase activity toward RPL3. Probably methylated on other residues.

Its subcellular location is the cytoplasm. It localises to the cytosol. The protein localises to the nucleus. It is found in the nucleolus. It catalyses the reaction L-histidyl-[protein] + S-adenosyl-L-methionine = N(tele)-methyl-L-histidyl-[protein] + S-adenosyl-L-homocysteine + H(+). Its function is as follows. Protein-L-histidine N-tele-methyltransferase that specifically monomethylates RPL3, thereby regulating translation elongation. Histidine methylation of RPL3 regulates translation elongation by slowing ribosome traversal on tyrosine codons: slower elongation provides enough time for proper folding of synthesized proteins and prevents cellular aggregation of tyrosine-rich proteins. In Mus musculus (Mouse), this protein is Histidine protein methyltransferase 1 homolog.